We begin with the raw amino-acid sequence, 471 residues long: Amidophosphoribosyltransferase (471 aa).

The active-site Nucleophile is cysteine 2. The 223-residue stretch at 2–224 (CGIFGIYSYE…PGEIIEIKDG (223 aa)) folds into the Glutamine amidotransferase type-2 domain. Cysteine 255 lines the [4Fe-4S] cluster pocket. The Mg(2+) site is built by serine 302, aspartate 364, and aspartate 365. Positions 401, 450, and 453 each coordinate [4Fe-4S] cluster.

This sequence in the C-terminal section; belongs to the purine/pyrimidine phosphoribosyltransferase family. Mg(2+) serves as cofactor. It depends on [4Fe-4S] cluster as a cofactor.

It catalyses the reaction 5-phospho-beta-D-ribosylamine + L-glutamate + diphosphate = 5-phospho-alpha-D-ribose 1-diphosphate + L-glutamine + H2O. It participates in purine metabolism; IMP biosynthesis via de novo pathway; N(1)-(5-phospho-D-ribosyl)glycinamide from 5-phospho-alpha-D-ribose 1-diphosphate: step 1/2. Its function is as follows. Catalyzes the formation of phosphoribosylamine from phosphoribosylpyrophosphate (PRPP) and glutamine. In Methanocaldococcus jannaschii (strain ATCC 43067 / DSM 2661 / JAL-1 / JCM 10045 / NBRC 100440) (Methanococcus jannaschii), this protein is Amidophosphoribosyltransferase.